The chain runs to 325 residues: N-acetyl-gamma-glutamyl-phosphate reductase (325 aa).

The active site involves cysteine 135.

This sequence belongs to the NAGSA dehydrogenase family. Type 1 subfamily.

It is found in the cytoplasm. The catalysed reaction is N-acetyl-L-glutamate 5-semialdehyde + phosphate + NADP(+) = N-acetyl-L-glutamyl 5-phosphate + NADPH + H(+). Its pathway is amino-acid biosynthesis; L-arginine biosynthesis; N(2)-acetyl-L-ornithine from L-glutamate: step 3/4. In terms of biological role, catalyzes the NADPH-dependent reduction of N-acetyl-5-glutamyl phosphate to yield N-acetyl-L-glutamate 5-semialdehyde. This chain is N-acetyl-gamma-glutamyl-phosphate reductase, found in Karelsulcia muelleri (strain GWSS) (Sulcia muelleri).